Here is an 86-residue protein sequence, read N- to C-terminus: MAKEELLEMEGLVDEILPDSRYRITLDNGHKLIAYTAGRVKKNHIRILAGDKVSLEVSPYDLSKGRITFRHIDKKQSFAGAPYRRH.

The 72-residue stretch at 1–72 (MAKEELLEME…SKGRITFRHI (72 aa)) folds into the S1-like domain.

Belongs to the IF-1 family. As to quaternary structure, component of the 30S ribosomal translation pre-initiation complex which assembles on the 30S ribosome in the order IF-2 and IF-3, IF-1 and N-formylmethionyl-tRNA(fMet); mRNA recruitment can occur at any time during PIC assembly.

Its subcellular location is the cytoplasm. One of the essential components for the initiation of protein synthesis. Stabilizes the binding of IF-2 and IF-3 on the 30S subunit to which N-formylmethionyl-tRNA(fMet) subsequently binds. Helps modulate mRNA selection, yielding the 30S pre-initiation complex (PIC). Upon addition of the 50S ribosomal subunit IF-1, IF-2 and IF-3 are released leaving the mature 70S translation initiation complex. This chain is Translation initiation factor IF-1 2, found in Polynucleobacter asymbioticus (strain DSM 18221 / CIP 109841 / QLW-P1DMWA-1) (Polynucleobacter necessarius subsp. asymbioticus).